A 163-amino-acid polypeptide reads, in one-letter code: Nucleotide-binding protein CJE0423 (163 aa).

The protein belongs to the YajQ family.

Its function is as follows. Nucleotide-binding protein. The chain is Nucleotide-binding protein CJE0423 from Campylobacter jejuni (strain RM1221).